We begin with the raw amino-acid sequence, 3795 residues long: NBPF family member NBPF10 (3795 aa).

Positions 75 to 119 (RQFKEEKLAEQLKQAEELRQYKVLVHSQERELTQLREKLREGRDA) form a coiled coil. Residues 161 to 200 (KLSPENDEDEDEDVQVEEAEKVLESSAPREVQKAEESKVP) form a disordered region. The segment covering 165–177 (ENDEDEDEDVQVE) has biased composition (acidic residues). Positions 165 to 259 (ENDEDEDEDV…ECQDALNILP (95 aa)) constitute an Olduvai 1 domain. The span at 190-200 (EVQKAEESKVP) shows a compositional bias: basic and acidic residues. Residues 346 to 390 (RQFKEEKLAEQLKQAEELRQYKVLVHAQERELTQLKEKLREGRDA) are a coiled coil. 41 consecutive Olduvai domains span residues 436 to 528 (ENDN…HIIP), 529 to 600 (ENES…VDIG), 601 to 692 (RHRW…PSCP), 695 to 750 (SREL…LDVD), 751 to 843 (RIKK…RSKK), 844 to 936 (ERRR…PSCP), 939 to 994 (SREL…LDVD), 995 to 1087 (RIKK…RSKK), 1088 to 1180 (ERRR…PSCP), 1183 to 1238 (SREL…LDVD), 1239 to 1331 (RIKK…RSKK), 1332 to 1424 (ERRR…PSCP), 1427 to 1482 (SREL…LDVD), 1483 to 1575 (RIKK…RSKK), 1576 to 1668 (ERRR…PSCP), 1671 to 1726 (SREL…LDVD), 1727 to 1819 (RIKK…RSKK), 1820 to 1912 (ERRR…PSCP), 1915 to 1970 (SREL…LDVD), 1971 to 2063 (RIKK…RSKK), 2064 to 2156 (ERRR…PSCP), 2159 to 2214 (SREL…LDVD), 2215 to 2307 (RIKK…RSKK), 2308 to 2400 (ERRR…PSCP), 2403 to 2458 (SREL…LDVD), 2459 to 2551 (RIKK…RSKK), 2552 to 2644 (ERRR…PSCP), 2647 to 2702 (SREL…LDVD), 2703 to 2795 (RIKK…RSKK), 2796 to 2888 (ERRR…PSCP), 2891 to 2946 (SREL…LDVD), 2947 to 3039 (RIKK…RSKK), 3040 to 3132 (ERRR…PSCP), 3135 to 3190 (SREL…LDVD), 3191 to 3283 (RIKK…RSKK), 3284 to 3376 (ERRR…PSCP), 3379 to 3434 (SREL…LDVD), 3435 to 3527 (RIKK…RSKK), 3528 to 3620 (ERRR…PSCP), 3623 to 3696 (SREL…RSKK), and 3697 to 3795 (ERRR…IFPQ). 2 disordered regions span residues 451-475 (EKVQ…EDSL) and 520-566 (WEDA…EGYS). Acidic residues-rich tracts occupy residues 530–539 (NESDDEEEEE) and 550–562 (ESEE…ESWD). Positions 830 to 868 (KGKGKKRRGRRSKKERRRGRKEGEEDQNPPCPRLSRELL) are disordered. The span at 831 to 849 (GKGKKRRGRRSKKERRRGR) shows a compositional bias: basic residues. Positions 1073 to 1109 (KKGKGKKRRGRRSKKERRRGRKEGEEDQNPPCPRLSR) are disordered. Residues 1075–1093 (GKGKKRRGRRSKKERRRGR) show a composition bias toward basic residues. 2 disordered regions span residues 1242 to 1261 (KDEE…SREL) and 1318 to 1353 (KGKG…RLSR). Residues 1319-1337 (GKGKKRRGRRSKKERRRGR) are compositionally biased toward basic residues. The interval 1562 to 1600 (KGKGKKRRGRRSKKERRRGRKEGEEDQNPPCPRLSRELL) is disordered. Positions 1563–1581 (GKGKKRRGRRSKKERRRGR) are enriched in basic residues. Positions 1806 to 1844 (KGKGKKRRGRRSKKERRRGRKEGEEDQNPPCPRLSRELL) are disordered. A compositionally biased stretch (basic residues) spans 1807–1825 (GKGKKRRGRRSKKERRRGR). The segment at 2050 to 2088 (KGKGKKRRGRRSKKERRRGRKEGEEDQNPPCPRLSRELL) is disordered. A compositionally biased stretch (basic residues) spans 2051 to 2069 (GKGKKRRGRRSKKERRRGR). Positions 2294–2332 (KGKGKKRRGRRSKKERRRGRKEGEEDQNPPCPRLSRELL) are disordered. Residues 2295-2313 (GKGKKRRGRRSKKERRRGR) show a composition bias toward basic residues. The interval 2538-2576 (KGKGKKRRGRRSKKERRRGRKEGEEDQNPPCPRLSRELL) is disordered. A compositionally biased stretch (basic residues) spans 2539–2557 (GKGKKRRGRRSKKERRRGR). The segment at 2782-2820 (KGKGKKRRGRRSKKERRRGRKEGEEDQNPPCPRLSRELL) is disordered. A compositionally biased stretch (basic residues) spans 2783–2801 (GKGKKRRGRRSKKERRRGR). Positions 3026-3064 (KGKGKKRRGRRSKKERRRGRKEGEEDQNPPCPRLSRELL) are disordered. The segment covering 3027–3045 (GKGKKRRGRRSKKERRRGR) has biased composition (basic residues). Disordered stretches follow at residues 3194–3213 (KDEE…SREL) and 3270–3308 (KGKG…RELL). Residues 3271–3289 (GKGKKRRGRRSKKERRRGR) show a composition bias toward basic residues. Disordered stretches follow at residues 3514-3552 (KGKG…RELL) and 3684-3716 (GKGK…CPRL). 2 stretches are compositionally biased toward basic residues: residues 3515–3533 (GKGK…RRGR) and 3684–3702 (GKGK…RRGR).

This sequence belongs to the NBPF family.

The protein localises to the cytoplasm. This Homo sapiens (Human) protein is NBPF family member NBPF10.